The sequence spans 384 residues: tRNA-specific 2-thiouridylase MnmA (384 aa).

ATP-binding positions include 21-28 and Met-47; that span reads GMSGGVDS. Residues 107–109 are interaction with target base in tRNA; that stretch reads NPD. Residue Cys-112 is the Nucleophile of the active site. The cysteines at positions 112 and 208 are disulfide-linked. Gly-136 contacts ATP. Residues 158-160 form an interaction with tRNA region; the sequence is KDQ. Catalysis depends on Cys-208, which acts as the Cysteine persulfide intermediate. Residues 320–321 are interaction with tRNA; the sequence is RY.

Belongs to the MnmA/TRMU family.

It localises to the cytoplasm. It carries out the reaction S-sulfanyl-L-cysteinyl-[protein] + uridine(34) in tRNA + AH2 + ATP = 2-thiouridine(34) in tRNA + L-cysteinyl-[protein] + A + AMP + diphosphate + H(+). In terms of biological role, catalyzes the 2-thiolation of uridine at the wobble position (U34) of tRNA, leading to the formation of s(2)U34. This chain is tRNA-specific 2-thiouridylase MnmA, found in Chromohalobacter salexigens (strain ATCC BAA-138 / DSM 3043 / CIP 106854 / NCIMB 13768 / 1H11).